Reading from the N-terminus, the 396-residue chain is Probable mannan endo-1,4-beta-mannosidase A-2 (396 aa).

The N-terminal stretch at 1–21 (MKVPRLLLALGGLASIHIASA) is a signal peptide. Residue tryptophan 99 participates in substrate binding. The N-linked (GlcNAc...) asparagine glycan is linked to asparagine 120. Substrate is bound at residue asparagine 212. Glutamate 213 serves as the catalytic Proton donor. Asparagine 270 is a glycosylation site (N-linked (GlcNAc...) asparagine). Substrate is bound at residue tyrosine 288. The active-site Nucleophile is glutamate 321. Tryptophan 351 contributes to the substrate binding site.

The protein belongs to the glycosyl hydrolase 5 (cellulase A) family.

It is found in the secreted. It carries out the reaction Random hydrolysis of (1-&gt;4)-beta-D-mannosidic linkages in mannans, galactomannans and glucomannans.. Endo-1,4-mannanase, a crucial enzyme for depolymerization of seed galactomannans and wood galactoglucomannans. This Aspergillus terreus (strain NIH 2624 / FGSC A1156) protein is Probable mannan endo-1,4-beta-mannosidase A-2 (manA-2).